A 207-amino-acid chain; its full sequence is Vascular endothelial growth factor B (207 aa).

Positions 1–21 are cleaved as a signal peptide; it reads MSPLLRRLLLVALLQLACTQA. Disulfide bonds link Cys-78–Cys-122 and Cys-82–Cys-124. Positions 140–182 are disordered; the sequence is IPHHRPQPRSVLSWDSAPGASSPADIIHPTPAPGPSAHAAPSA.

Belongs to the PDGF/VEGF growth factor family. Homodimer; disulfide-linked. Can also form heterodimer with VEGF.

Its subcellular location is the secreted. Functionally, growth factor for endothelial cells. VEGF-B167 binds heparin and neuropilin-1 whereas the binding to neuropilin-1 of VEGF-B186 is regulated by proteolysis. The polypeptide is Vascular endothelial growth factor B (Vegfb) (Rattus norvegicus (Rat)).